The primary structure comprises 196 residues: MITVALIDDHLIVRSGFAQLLGLEPDLQVVAEFGSGREALAGLPGRGVQVCICDISMPDISGLELLSQLPKGMATIVLSVHDSPALVEQALNAGARGFLSKRCSPDELIAAVHTVATGGCYLTPDIAVKLAAGRQDPLTKRERQVAEKLAQGMAVKEIAAELGLSPKTVHVHRANLLEKLGVSNDVELAHRMFDGW.

The 114-residue stretch at 3 to 116 (TVALIDDHLI…ELIAAVHTVA (114 aa)) folds into the Response regulatory domain. D54 is subject to 4-aspartylphosphate. The 66-residue stretch at 131 to 196 (AAGRQDPLTK…ELAHRMFDGW (66 aa)) folds into the HTH luxR-type domain. Residues 155 to 174 (VKEIAAELGLSPKTVHVHRA) constitute a DNA-binding region (H-T-H motif).

Post-translationally, phosphorylated and dephosphorylated by UhpB.

Its subcellular location is the cytoplasm. In terms of biological role, part of the UhpABC signaling cascade that controls the expression of the hexose phosphate transporter UhpT. Activates the transcription of the uhpT gene. Acts by binding specifically to the uhpT promoter region. This Salmonella typhimurium (strain LT2 / SGSC1412 / ATCC 700720) protein is Transcriptional regulatory protein UhpA (uhpA).